The sequence spans 687 residues: MEEFVGLREGSSGNPVTLQELWGPCPRIRRGIRGGLEWLKQKLFRLGEDWYFLMTLGVLMALVSCAMDLAVESVVRAHQWLYREIGDSHLLRYLSWTVYPVALVSFSSGFSQSITPSSGGSGIPEVKTMLAGVVLEDYLDIKNFGAKVVGLSCTLACGSTLFLGKVGPFVHLSVMMAAYLGRVRTTTIGEPENKSKQNEMLVAAAAVGVATVFAAPFSGVLFSIEVMSSHFSVWDYWRGFFAATCGAFMFRLLAVFNSEQETITSLYKTSFRVDVPFDLPEIFFFVALGGLCGILGSAYLFCQRIFFGFIRNNRFSSKLLATSKPVYSALATLVLASITYPPSAGRFLASRLSMKQHLDSLFDNHSWALMTQNSSPPWPEELDPQHLWWEWYHPRFTIFGTLAFFLVMKFWMLILATTIPMPAGYFMPIFVYGAAIGRLFGETLSFIFPEGIVAGGITNPIMPGGYALAGAAAFSGAVTHTISTALLAFEVTGQIVHALPVLMAVLAANAIAQSCQPSFYDGTVIVKKLPYLPRILGRNIGSHRVRVEHFMNHSITTLAKDMPLEEVVKVVTSTDVAKYPLVESTESQILVGIVRRAQLVQALKAEPPSWAPGHQQCLQDILAAGCPTEPVTLKLSPETSLHEAHNLFELLNLHSLFVTSRGRAVGCVSWVEMKKAISNLTNPPAPK.

Topologically, residues 1-50 are cytoplasmic; it reads MEEFVGLREGSSGNPVTLQELWGPCPRIRRGIRGGLEWLKQKLFRLGEDW. Helical transmembrane passes span 51–82 and 91–111; these read YFLM…QWLY and LRYL…SGFS. Residues 116-127 constitute an intramembrane region (helical); sequence PSSGGSGIPEVK. Ser-121 contacts chloride. 2 helical membrane passes run 141–160 and 161–180; these read IKNF…CGST and LFLG…AAYL. The N-linked (GlcNAc...) asparagine glycan is linked to Asn-193. The segment at residues 203–224 is an intramembrane region (helical); it reads AAAAVGVATVFAAPFSGVLFSI. The helical transmembrane segment at 236 to 255 threads the bilayer; the sequence is YWRGFFAATCGAFMFRLLAV. Positions 259, 261, 278, and 281 each coordinate Ca(2+). 2 helical membrane-spanning segments follow: residues 282–310 and 325–342; these read IFFF…FGFI and PVYS…TYPP. Residues 349 to 360 constitute an intramembrane region (helical); sequence ASRLSMKQHLDS. The next 2 helical transmembrane spans lie at 400–420 and 421–440; these read GTLA…TTIP and MPAG…GRLF. Position 426 (Phe-426) interacts with chloride. Positions 464–496 form an intramembrane region, helical; that stretch reads GGYALAGAAAFSGAVTHTISTALLAFEVTGQIV. A helical transmembrane segment spans residues 500–520; sequence PVLMAVLAANAIAQSCQPSFY. Over 521–687 the chain is Cytoplasmic; sequence DGTVIVKKLP…SNLTNPPAPK (167 aa). 2 CBS domains span residues 551 to 609 and 626 to 684; these read MNHS…EPPS and CPTE…TNPP.

Belongs to the chloride channel (TC 2.A.49) family. CLCNKB subfamily. Homodimer. Interacts with BSND. Post-translationally, N-glycosylated.

It localises to the basolateral cell membrane. It carries out the reaction chloride(in) = chloride(out). The catalysed reaction is iodide(out) = iodide(in). The enzyme catalyses nitrate(in) = nitrate(out). It catalyses the reaction bromide(in) = bromide(out). Activated by extracellular Ca(2+) and inhibited by extracellular acidic pH. Its function is as follows. Anion-selective channel permeable to small monovalent anions with ion selectivity for chloride &gt; bromide &gt; nitrate &gt; iodide. Forms a homodimeric channel where each subunit has its own ion conduction pathway. May conduct double-barreled currents controlled by two types of gates, two fast gates that control each subunit independently and a slow common gate that opens and shuts off both subunits simultaneously. Assembles with the regulatory subunit BSND/Barttin for sorting at the basolateral plasma membrane domain and functional switch to the ion conducting state. CLCNKB:BSND channels display mostly a linear current-voltage relationship controlled by common gate. Mediates chloride conductance along nephron segments, namely the thick ascending limb of Henle's loop, convoluted tubule and the collecting duct, contributing to the maintenance of systemic acid-base and electrolyte homeostasis. Conducts chloride currents in the stria vascularis of the inner ear to establish the endocochlear potential necessary for normal hearing. This chain is Chloride channel protein ClC-Kb, found in Homo sapiens (Human).